We begin with the raw amino-acid sequence, 252 residues long: NDR1/HIN1-like protein 6 (252 aa).

A disordered region spans residues methionine 1–proline 46. The chain crosses the membrane as a helical span at residues phenylalanine 70–valine 90. N-linked (GlcNAc...) asparagine glycans are attached at residues asparagine 121, asparagine 154, asparagine 166, and asparagine 180.

As to quaternary structure, homodimer. As to expression, highly expressed in seeds and at lower level in roots and senescing leaves. Expressed in leaves and flowers.

It localises to the cell membrane. The protein resides in the cytoplasm. It is found in the cytosol. Plays an important role in the abiotic stresses-induced abscisic acid (ABA) signaling and biosynthesis. Acts as a positive regulator of ABA-mediated seed germination inhibition. Functions downstream of ABF2/AREB1, ABF4/AREB2 and ABF3. This Arabidopsis thaliana (Mouse-ear cress) protein is NDR1/HIN1-like protein 6.